A 424-amino-acid polypeptide reads, in one-letter code: Adenylosuccinate synthetase (424 aa).

GTP is bound by residues 12-18 (GDEGKGK) and 40-42 (GHT). D13 acts as the Proton acceptor in catalysis. Positions 13 and 40 each coordinate Mg(2+). Residues 13 to 16 (DEGK), 38 to 41 (NAGH), T130, R144, N220, T235, and R299 contribute to the IMP site. The active-site Proton donor is H41. Substrate is bound at residue 295 to 301 (VTTGRRR). Residues R301, 327 to 329 (KLD), and 412 to 414 (GTG) each bind GTP.

It belongs to the adenylosuccinate synthetase family. As to quaternary structure, homodimer. Requires Mg(2+) as cofactor.

It localises to the cytoplasm. The enzyme catalyses IMP + L-aspartate + GTP = N(6)-(1,2-dicarboxyethyl)-AMP + GDP + phosphate + 2 H(+). It functions in the pathway purine metabolism; AMP biosynthesis via de novo pathway; AMP from IMP: step 1/2. Plays an important role in the de novo pathway and in the salvage pathway of purine nucleotide biosynthesis. Catalyzes the first committed step in the biosynthesis of AMP from IMP. This chain is Adenylosuccinate synthetase, found in Aspergillus clavatus (strain ATCC 1007 / CBS 513.65 / DSM 816 / NCTC 3887 / NRRL 1 / QM 1276 / 107).